A 210-amino-acid chain; its full sequence is Large ribosomal subunit protein uL3 (210 aa).

The disordered stretch occupies residues 133–152 (ATHGNSLSHRVHGSTGQNQT). Residue Gln-151 is modified to N5-methylglutamine.

The protein belongs to the universal ribosomal protein uL3 family. Part of the 50S ribosomal subunit. Forms a cluster with proteins L14 and L19. Post-translationally, methylated by PrmB.

Functionally, one of the primary rRNA binding proteins, it binds directly near the 3'-end of the 23S rRNA, where it nucleates assembly of the 50S subunit. In Francisella philomiragia subsp. philomiragia (strain ATCC 25017 / CCUG 19701 / FSC 153 / O#319-036), this protein is Large ribosomal subunit protein uL3.